The sequence spans 295 residues: Ornithine carbamoyltransferase, catabolic (295 aa).

Carbamoyl phosphate is bound by residues 49–52 (STRT), Gln-76, Arg-100, and 127–130 (HPCQ). L-ornithine is bound by residues Asn-155, Asp-213, and 217-218 (SM). Residues 253-254 (CL) and Arg-281 each bind carbamoyl phosphate.

Belongs to the aspartate/ornithine carbamoyltransferase superfamily. OTCase family. Homohexamer.

It localises to the cytoplasm. It carries out the reaction carbamoyl phosphate + L-ornithine = L-citrulline + phosphate + H(+). It participates in amino-acid degradation; L-arginine degradation via ADI pathway; carbamoyl phosphate from L-arginine: step 2/2. Its activity is regulated as follows. Arginine lead to a slight activation. Inhibited by all nucleotide phosphates. Functionally, reversibly catalyzes the transfer of the carbamoyl group from carbamoyl phosphate (CP) to the N(epsilon) atom of ornithine (ORN) to produce L-citrulline. This chain is Ornithine carbamoyltransferase, catabolic (arcB), found in Halobacterium salinarum (strain ATCC 700922 / JCM 11081 / NRC-1) (Halobacterium halobium).